Here is a 233-residue protein sequence, read N- to C-terminus: MKPASTRLLAINAVSKVFHDGACETQVLHEVNLTVHRGEQLAIVGSSGSGKSTLLHIMGTLESPTSGTVLLEGENLHQLSSKRQAQIRNQDLGFIYQFHHLLPEFSALENVAMPAFIQGKNKAQTLAEAKALLERVGLGHRLTHLPSQLSGGERQRVAIARALINKPKLVLADEPTGNLDAVSGEAVYGLIRELAEQLGTAFVVVTHDANLAARMDRQVNMKDGILSQSETHR.

Residues 9–233 (LAINAVSKVF…GILSQSETHR (225 aa)) enclose the ABC transporter domain. Position 45-52 (45-52 (GSSGSGKS)) interacts with ATP.

The protein belongs to the ABC transporter superfamily. Lipoprotein translocase (TC 3.A.1.125) family. The complex is composed of two ATP-binding proteins (LolD) and two transmembrane proteins (LolC and LolE).

The protein resides in the cell inner membrane. In terms of biological role, part of the ABC transporter complex LolCDE involved in the translocation of mature outer membrane-directed lipoproteins, from the inner membrane to the periplasmic chaperone, LolA. Responsible for the formation of the LolA-lipoprotein complex in an ATP-dependent manner. The polypeptide is Lipoprotein-releasing system ATP-binding protein LolD (Shewanella denitrificans (strain OS217 / ATCC BAA-1090 / DSM 15013)).